The primary structure comprises 433 residues: Succinate--CoA ligase [GDP-forming] subunit beta, mitochondrial (433 aa).

Residues methionine 1 to tryptophan 38 constitute a mitochondrion transit peptide. The ATP-grasp domain occupies lysine 47–phenylalanine 275. Glutamine 58 lines the GTP pocket. An N6-acetyllysine; alternate modification is found at lysine 67. Lysine 67 is subject to N6-succinyllysine; alternate. An N6-acetyllysine modification is found at lysine 74. Lysine 79 is modified (N6-succinyllysine). Position 91–93 (glycine 91–glycine 93) interacts with GTP. N6-acetyllysine is present on residues lysine 112, lysine 133, and lysine 140. A GTP-binding site is contributed by leucine 147. Serine 162 bears the Phosphoserine mark. Residue lysine 201 is modified to N6-acetyllysine. Serine 217 is modified (phosphoserine). 2 positions are modified to N6-acetyllysine: lysine 219 and lysine 228. Positions 244 and 258 each coordinate Mg(2+). An N6-acetyllysine modification is found at lysine 272. Substrate is bound at residue asparagine 309. The residue at position 339 (lysine 339) is an N6-succinyllysine. N6-acetyllysine is present on lysine 348. Glycine 366–valine 368 contacts substrate. Residues lysine 387, lysine 407, and lysine 424 each carry the N6-acetyllysine modification.

This sequence belongs to the succinate/malate CoA ligase beta subunit family. GTP-specific subunit beta subfamily. As to quaternary structure, heterodimer of an alpha and a beta subunit. The beta subunit determines specificity for GTP. It depends on Mg(2+) as a cofactor.

The protein localises to the mitochondrion. It catalyses the reaction GTP + succinate + CoA = succinyl-CoA + GDP + phosphate. The protein operates within carbohydrate metabolism; tricarboxylic acid cycle; succinate from succinyl-CoA (ligase route): step 1/1. In terms of biological role, GTP-specific succinyl-CoA synthetase functions in the citric acid cycle (TCA), coupling the hydrolysis of succinyl-CoA to the synthesis of GTP and thus represents the only step of substrate-level phosphorylation in the TCA. The beta subunit provides nucleotide specificity of the enzyme and binds the substrate succinate, while the binding sites for coenzyme A and phosphate are found in the alpha subunit. The polypeptide is Succinate--CoA ligase [GDP-forming] subunit beta, mitochondrial (Mus musculus (Mouse)).